Consider the following 1128-residue polypeptide: Transient receptor potential-gamma protein (1128 aa).

At 1–325 (MMEEENTIRP…MALQAVDIIR (325 aa)) the chain is on the cytoplasmic side. ANK repeat units follow at residues 57–86 (LGRT…DTKD) and 131–160 (PDIT…VLPM). A helical transmembrane segment spans residues 326 to 346 (IGIMFPIFSLAYILAPYSSIG). The Extracellular portion of the chain corresponds to 347-403 (QTMRKPFIKFICHSASYFTFLFLLMLASQRIETFIGGWFFADSSGMLNTMEELPTKR). The helical transmembrane segment at 404-424 (GAKPTFIEWLILAWVSGLIWS) threads the bilayer. Residues 425–444 (EVKQLWDVGLQEYLNDMWNV) are Cytoplasmic-facing. The chain crosses the membrane as a helical span at residues 445 to 465 (IDFVTNSLYVATVALRVVSFF). Over 466–492 (QVQKEMIYNSHATDLPRERWDAWDPML) the chain is Extracellular. Residues 493 to 513 (ISEGLFSAANIFSSLKLVYIF) traverse the membrane as a helical segment. Residues 514–535 (SVNPHLGPLQVSLSRMVMDIMK) lie on the Cytoplasmic side of the membrane. Residues 536–556 (FFFLYVLVLFAFGSGLNQLLW) form a helical membrane-spanning segment. Residues 557 to 629 (YYADLEKKRC…GIKIFTRFWG (73 aa)) lie on the Extracellular side of the membrane. The helical transmembrane segment at 630 to 650 (MLMFGTYSVINIVVLLNLLIA) threads the bilayer. Residues 651–1128 (MMNHSYQLIS…SCVSTTGAIG (478 aa)) are Cytoplasmic-facing. 2 disordered regions span residues 865–898 (RQQS…TASS) and 1064–1111 (AAEA…SVNS). Residues 878 to 893 (ESPTTPTAPQGTQGAA) are compositionally biased toward low complexity. The span at 1085–1111 (TQSQHDSVETNSTFTLSIDPSNTSVNS) shows a compositional bias: polar residues.

The protein belongs to the transient receptor (TC 1.A.4) family. STrpC subfamily. As to quaternary structure, interacts preferentially with trpl and interacts to a lower extent with trp. In terms of tissue distribution, expressed predominantly in the rhabdomeres of photoreceptor cells.

It is found in the cell projection. Its subcellular location is the rhabdomere membrane. A light-sensitive calcium channel that is required for inositide-mediated Ca(2+) entry in the retina during phospholipase C (PLC)-mediated phototransduction. Forms a regulated cation channel when heteromultimerized with trpl. In Drosophila melanogaster (Fruit fly), this protein is Transient receptor potential-gamma protein (Trpgamma).